We begin with the raw amino-acid sequence, 1307 residues long: MESPSCIQDEPFPHPLEPEPSAPAQPGATKPGDKRFRLWYVGGSCLDRRTTLPMLPWLMAEIRRRSQKPDAGGCGAPAAREVILVLSAPFLRCVPAPGAGVGGGAGSGAVQPNTGVFIFEHKAQHISRFIHNSHDLTYFAYLIKAQPDDPESQMACHVFRATDPNQVPDVISSIRQLSKAAMKEDSKPSKDNEDAFYNSQKFEVLYCGRVIVTHKKAPSSLIDDCKDKFSLHEQQRLKLQGERGGDPGDEMGVLEVESPVSPDDSLPEKADGTVNSPRALPSLASLPALASQPALASSRVCFPERILEDCGFDEQQEFRSRCSSVTGVMQKKVHENNQKTQPRRRHASAPSHVQPSDSEKNRTMLFQVGRFEINLISPDTKSVVLEKNFKDISSCSQGIKHVDHFGFICRESPEPGLSQYICYVFQCANESLVDEVMLTLKQAFSTAAALQSAKTQIKLCETCPMHSLHKLCERIEGLYPPRAKLVIQRHLSSLTDNEQADIFERVQKMKPISDQEENELVILHLRQLCEAKQRTHVHIGEGPAIISNSTIPENVTSGGRFKLDVLKNKAKRSLTSSLENIFSRGANRMRGRLGSMDSFERANSLASEKDFSPGDSPPGTPPASPLSSAWHAFPEEDSDSPQFRRRAHTFSHPPSSSRRKLNLQDGKAHGLRSPLLRQSSSEQCSIVPSARRMYKESNSSCSLPSLHTSFSAPSFTAPSFLKSFYQNSGRLSPQYENEIRQDTASESSDGEGRKRTSSTCSNESLNAGGTPVTPRRVSWRQRIFLRVASPVNKSPSAMQQQKDGLDRTELLPLSPLSPTMEEEPLIIFLSGDEDTEKVEEKKKSKELKSLWKKAIHQQILLLRMEKENQKLEEARRDELQSRKVKLDYEEVGTCQKEILIAWDKKLLNCRTKIRCDMEDIHTSLKEGVPKSRRGEIWQFLALQYRLRHRLPNKHQPPDTSYKELLKQLTAQQHAILVDLGRTFPTHPYFSVQLGAGQLSLFNLLKAYSLLDKEVGYCQGISFVAGVLLLHMSEEQAFEMLKFLMYDLGFRKQYRPDMMSLQIQMYQLSRLLHDYHRELYNHLEENEISPSLYAAPWFLTLFASQFPLGFVARVFDIIFLQGTEVIFKVALSLLSSQEALIMECENFENIVEFLKSTLPDMNTTEMEKIITQVFEMDISKQLHAYEVEYHVLQDELLESSYACEDNESLEKLERANNQLKRQNMDLLEKLQVAHAKIQALESNLETLLTRETKMKALIRTLEQDKMAYQKTVEQIRKLLPADALANCELLLKDLTHPTNDKAKAGNKP.

An N-acetylmethionine modification is found at M1. The disordered stretch occupies residues 1–30; it reads MESPSCIQDEPFPHPLEPEPSAPAQPGATK. Residues 13 to 23 show a composition bias toward pro residues; the sequence is PHPLEPEPSAP. Positions 53-209 constitute a PID 1 domain; that stretch reads PMLPWLMAEI…QKFEVLYCGR (157 aa). The span at 237–246 shows a compositional bias: basic and acidic residues; the sequence is LKLQGERGGD. The interval 237-276 is disordered; the sequence is LKLQGERGGDPGDEMGVLEVESPVSPDDSLPEKADGTVNS. Residues S258, S261, and S320 each carry the phosphoserine modification. One can recognise a PID 2 domain in the interval 319–475; it reads RSRCSSVTGV…HSLHKLCERI (157 aa). 2 positions are modified to phosphoserine; by PKB/AKT1: S324 and S348. Positions 330-360 are disordered; sequence QKKVHENNQKTQPRRRHASAPSHVQPSDSEK. S351 carries the phosphoserine modification. Residue K484 is modified to N6-acetyllysine. S573 is subject to Phosphoserine. At T575 the chain carries Phosphothreonine. S577 is subject to Phosphoserine; by PKB/AKT1. An Omega-N-methylarginine modification is found at R584. Phosphoserine; by PKB/AKT1 is present on S595. Phosphoserine is present on residues S598 and S616. 2 disordered regions span residues 603-684 and 732-774; these read NSLA…SEQC and SPQY…PVTP. Over residues 615-624 the composition is skewed to pro residues; sequence DSPPGTPPAS. A Phosphothreonine modification is found at T620. A Phosphoserine modification is found at S624. Residue T649 is modified to Phosphothreonine; by PKB/AKT1. S673 carries the phosphoserine modification. The span at 757-767 shows a compositional bias: polar residues; that stretch reads SSTCSNESLNA. S758 carries the phosphoserine; by PKB/AKT1 modification. S761 and S764 each carry phosphoserine. Phosphothreonine is present on T770. The Rab-GAP TBC domain maps to 927 to 1121; that stretch reads GVPKSRRGEI…RVFDIIFLQG (195 aa).

Phosphorylated by AKT1; insulin-induced. Also phosphorylated by AMPK in response to insulin. Insulin-stimulated phosphorylation is required for SLC2A4/GLUT4 translocation. Has no effect on SLC2A4/GLUT4 internalization. In terms of tissue distribution, widely expressed, including in pancreatic beta cells.

The protein localises to the cytoplasm. Functionally, may act as a GTPase-activating protein for RAB2A, RAB8A, RAB10 and RAB14. Promotes insulin-induced glucose transporter SLC2A4/GLUT4 translocation at the plasma membrane, thus increasing glucose uptake. This is TBC1 domain family member 4 (Tbc1d4) from Mus musculus (Mouse).